The primary structure comprises 300 residues: B1 kinase (300 aa).

The Protein kinase domain maps to 16–282 (WVVGPLIGKG…ITMVNSLTYF (267 aa)). Residues 22–30 (IGKGGFGSI) and Lys-45 each bind ATP. Catalysis depends on Asn-147, which acts as the Proton acceptor.

It belongs to the protein kinase superfamily. Ser/Thr protein kinase family. Poxviruses subfamily. In terms of assembly, interacts with host JIP1; this interaction increases the amount of MAPK bound to JIP1 and subsequently increases the activity of transcription factors, such as JUN, that respond to these complexes. Interacts with protein OPG198; this interaction inhibits the repressive activity of OPG198 pseudokinase on viral replication factory formation. Mg(2+) serves as cofactor. Post-translationally, autophosphorylated.

Its subcellular location is the virion. It localises to the host cytoplasm. It catalyses the reaction L-seryl-[protein] + ATP = O-phospho-L-seryl-[protein] + ADP + H(+). The enzyme catalyses L-threonyl-[protein] + ATP = O-phospho-L-threonyl-[protein] + ADP + H(+). Essential serine/threonine-protein kinase that plays different role in the viral life cycle. Phosphorylates the host small ribosomal protein RACK1 thereby customizing the ribosomes to a state optimal for viral mRNAs (which contain poly-A leaders) but not for host mRNAs. Facilitates viral DNA replication by inhibiting host BANF1, a cellular host defense responsive to foreign DNA. Phosphorylates host BANF1 on serine and threonine residues; this leads to BANF1 relocalization to the cytoplasm, loss of dimerization and impaired DNA binding activity. Indeed, BANF1 activity depends on its DNA-binding property which is blocked by VPK1-mediated phosphorylation. Required for viral intermediate genes expression, probably by inhibiting host BANF1. Modulates cellular responses via host JUN by two different mechanisms, either by direct phosphorylation or by modulation of upstream JIP1-MAPK complexes. Seems to participate in the accumulation/processing of late proteins and thus in virion maturation. In addition, inhibits B12 repressive activity on viral DNA replication via a phosphorylation-dependent mechanism. This Homo sapiens (Human) protein is B1 kinase (OPG187).